The chain runs to 193 residues: dCTP deaminase (193 aa).

Residues R110–R115, D128, V136–E138, Y171, K178, and Q182 each bind dCTP. The active-site Proton donor/acceptor is E138.

Belongs to the dCTP deaminase family. As to quaternary structure, homotrimer.

It carries out the reaction dCTP + H2O + H(+) = dUTP + NH4(+). The protein operates within pyrimidine metabolism; dUMP biosynthesis; dUMP from dCTP (dUTP route): step 1/2. Catalyzes the deamination of dCTP to dUTP. This chain is dCTP deaminase, found in Aeromonas hydrophila subsp. hydrophila (strain ATCC 7966 / DSM 30187 / BCRC 13018 / CCUG 14551 / JCM 1027 / KCTC 2358 / NCIMB 9240 / NCTC 8049).